The sequence spans 318 residues: Pantothenate kinase (318 aa).

An ATP-binding site is contributed by 96 to 103 (GSVSVGKS).

The protein belongs to the prokaryotic pantothenate kinase family.

The protein resides in the cytoplasm. The catalysed reaction is (R)-pantothenate + ATP = (R)-4'-phosphopantothenate + ADP + H(+). The protein operates within cofactor biosynthesis; coenzyme A biosynthesis; CoA from (R)-pantothenate: step 1/5. The sequence is that of Pantothenate kinase from Bradyrhizobium sp. (strain ORS 278).